The chain runs to 146 residues: D-aminoacyl-tRNA deacylase (146 aa).

The Gly-cisPro motif, important for rejection of L-amino acids signature appears at 137–138 (GP).

This sequence belongs to the DTD family. In terms of assembly, homodimer.

The protein resides in the cytoplasm. The catalysed reaction is glycyl-tRNA(Ala) + H2O = tRNA(Ala) + glycine + H(+). It carries out the reaction a D-aminoacyl-tRNA + H2O = a tRNA + a D-alpha-amino acid + H(+). Its function is as follows. An aminoacyl-tRNA editing enzyme that deacylates mischarged D-aminoacyl-tRNAs. Also deacylates mischarged glycyl-tRNA(Ala), protecting cells against glycine mischarging by AlaRS. Acts via tRNA-based rather than protein-based catalysis; rejects L-amino acids rather than detecting D-amino acids in the active site. By recycling D-aminoacyl-tRNA to D-amino acids and free tRNA molecules, this enzyme counteracts the toxicity associated with the formation of D-aminoacyl-tRNA entities in vivo and helps enforce protein L-homochirality. In Bacillus cereus (strain G9842), this protein is D-aminoacyl-tRNA deacylase.